The sequence spans 427 residues: Serine--tRNA ligase (427 aa).

236-238 (TAE) contacts L-serine. Position 267–269 (267–269 (RRE)) interacts with ATP. Position 290 (E290) interacts with L-serine. 354–357 (EISS) provides a ligand contact to ATP. Position 390 (S390) interacts with L-serine.

This sequence belongs to the class-II aminoacyl-tRNA synthetase family. Type-1 seryl-tRNA synthetase subfamily. Homodimer. The tRNA molecule binds across the dimer.

The protein localises to the cytoplasm. It catalyses the reaction tRNA(Ser) + L-serine + ATP = L-seryl-tRNA(Ser) + AMP + diphosphate + H(+). It carries out the reaction tRNA(Sec) + L-serine + ATP = L-seryl-tRNA(Sec) + AMP + diphosphate + H(+). Its pathway is aminoacyl-tRNA biosynthesis; selenocysteinyl-tRNA(Sec) biosynthesis; L-seryl-tRNA(Sec) from L-serine and tRNA(Sec): step 1/1. Its function is as follows. Catalyzes the attachment of serine to tRNA(Ser). Is also able to aminoacylate tRNA(Sec) with serine, to form the misacylated tRNA L-seryl-tRNA(Sec), which will be further converted into selenocysteinyl-tRNA(Sec). This is Serine--tRNA ligase from Picosynechococcus sp. (strain ATCC 27264 / PCC 7002 / PR-6) (Agmenellum quadruplicatum).